The following is an 85-amino-acid chain: ATP synthase subunit c (85 aa).

2 helical membrane passes run 10 to 30 and 53 to 73; these read IAVG…FALL and FIIA…ALLF.

It belongs to the ATPase C chain family. F-type ATPases have 2 components, F(1) - the catalytic core - and F(0) - the membrane proton channel. F(1) has five subunits: alpha(3), beta(3), gamma(1), delta(1), epsilon(1). F(0) has three main subunits: a(1), b(2) and c(10-14). The alpha and beta chains form an alternating ring which encloses part of the gamma chain. F(1) is attached to F(0) by a central stalk formed by the gamma and epsilon chains, while a peripheral stalk is formed by the delta and b chains.

The protein localises to the cell inner membrane. Functionally, f(1)F(0) ATP synthase produces ATP from ADP in the presence of a proton or sodium gradient. F-type ATPases consist of two structural domains, F(1) containing the extramembraneous catalytic core and F(0) containing the membrane proton channel, linked together by a central stalk and a peripheral stalk. During catalysis, ATP synthesis in the catalytic domain of F(1) is coupled via a rotary mechanism of the central stalk subunits to proton translocation. In terms of biological role, key component of the F(0) channel; it plays a direct role in translocation across the membrane. A homomeric c-ring of between 10-14 subunits forms the central stalk rotor element with the F(1) delta and epsilon subunits. The protein is ATP synthase subunit c of Aliivibrio fischeri (strain ATCC 700601 / ES114) (Vibrio fischeri).